The sequence spans 52 residues: AANQHLCGAHLVEALYLVCGERGFFYTPNKVGIVEQCCHSPCSLYDLENYCN.

3 cysteine pairs are disulfide-bonded: Cys-7-Cys-38, Cys-19-Cys-51, and Cys-37-Cys-42.

It belongs to the insulin family. Heterodimer of a B chain and an A chain linked by two disulfide bonds.

The protein resides in the secreted. Insulin decreases blood glucose concentration. It increases cell permeability to monosaccharides, amino acids and fatty acids. It accelerates glycolysis, the pentose phosphate cycle, and glycogen synthesis in liver. This chain is Insulin-2, found in Huso dauricus (Kaluga sturgeon).